A 3685-amino-acid polypeptide reads, in one-letter code: Dystrophin (3685 aa).

Positions 1 to 240 (MLWWEEVEDC…YITSLFQVLP (240 aa)) are actin-binding. Calponin-homology (CH) domains lie at 15–119 (DVQK…LHWQ) and 134–240 (TNSE…QVLP). The segment at 63–72 (PKEKGSTRVH) is ANK2- and ANK-3 binding. Spectrin repeat units lie at residues 339 to 447 (VNLD…NLHR), 448 to 556 (VLMD…LLQD), 559 to 667 (LKWQ…QISQ), 719 to 828 (EIRK…WLEY), 830 to 934 (NNII…ELQT), 943 to 1045 (RYQE…KLEE), 1048 to 1154 (NKLR…ALKG), 1157 to 1263 (EKTV…TLEE), 1266 to 1367 (ACWH…LLEQ), 1368 to 1463 (SIQS…LFQK), 1468 to 1568 (EQRL…QLEK), 1571 to 1676 (KLSR…LLLE), 1679 to 1778 (KHME…KASI), 1779 to 1874 (PLKE…KALE), 1877 to 1979 (HQWY…TVRE), 1992 to 2101 (EISY…RFDR), 2104 to 2208 (EKWR…RLEE), 2211 to 2318 (NILS…EIEA), 2319 to 2423 (QIKD…LRAK), 2475 to 2577 (FNRA…QLNE), 2580 to 2686 (KDST…ALEE), 2689 to 2802 (RLLQ…HLEA), 2808 to 2930 (KRLH…RKID), and 2935 to 3040 (RLRE…QLHE). Asn340 is subject to Phosphothreonine. 2 positions are modified to phosphoserine: Tyr344 and Leu348. Residues Glu519, Ser616, and Ser629 each carry the phosphothreonine modification. The interaction with SYNM stretch occupies residues 1415–1913 (SDLTSHEISL…PEPRDERKIK (499 aa)). Residues 3055–3088 (TSVQGPWERAISPNKVPYYINHETQTTCWDHPKM) form the WW domain. An interaction with SYNM region spans residues 3058–3408 (QGPWERAISP…TVLEGDNMET (351 aa)). The ZZ-type; degenerate zinc finger occupies 3308 to 3364 (KHQAKCNICKECPIIGFRYRSLKHFNYDICQSCFFSGRVAKGHKMHYPMVEYCTPTT). 4 residues coordinate Zn(2+): Cys3313, Cys3316, Cys3337, and Cys3340. Positions 3466-3518 (DDEHLLIQHYCQSLNQDSPLSQPRSPAQILISLESEERGELERILADLEEENR) are binds to SNTB1. Residues Ser3483, Ser3490, and Ser3500 each carry the phosphoserine modification. Disordered stretches follow at residues 3528–3554 (KQQH…QSPR) and 3603–3685 (EAKV…EDTM). Polar residues-rich tracts occupy residues 3607–3626 (NGTT…SSQP) and 3662–3673 (QLNNSFPSSRGR). Phosphoserine occurs at positions 3612, 3613, 3617, 3623, 3624, and 3666.

Interacts with SYNM. Interacts with the syntrophins SNTA1, SNTB1, SNTB2, SNTG1 and SNTG2. Interacts with KRT19. Component of the dystrophin-associated glycoprotein complex which is composed of three subcomplexes: a cytoplasmic complex comprised of DMD (or UTRN), DTNA and a number of syntrophins, such as SNTB1, SNTB2, SNTG1 and SNTG2, the transmembrane dystroglycan complex, and the sarcoglycan-sarcospan complex. Interacts with DAG1 (betaDAG1) with DMD; the interaction is inhibited by phosphorylation on the PPXY motif of DAG1. Interacts with CMYA5. Directly interacts with ANK2 and ANK3; these interactions do not interfere with betaDAG1-binding and are necessary for proper localization in muscle cells. Identified in a dystroglycan complex that contains at least PRX, DRP2, UTRN, DMD and DAG1. Interacts with DTNB. Interacts with PGM5; the interaction is direct. Interacts with NOS1; localizes NOS1 to sarcolemma in muscle cells. In terms of tissue distribution, expressed in muscle fibers accumulating in the costameres of myoplasm at the sarcolemma. Expressed in brain, muscle, kidney, lung and testis. Most tissues contain transcripts of multiple isoforms. Isoform 15: Only isoform to be detected in heart and liver and is also expressed in brain, testis and hepatoma cells.

The protein localises to the cell membrane. It is found in the sarcolemma. Its subcellular location is the cytoplasm. It localises to the cytoskeleton. The protein resides in the postsynaptic cell membrane. In terms of biological role, anchors the extracellular matrix to the cytoskeleton via F-actin. Ligand for dystroglycan. Component of the dystrophin-associated glycoprotein complex which accumulates at the neuromuscular junction (NMJ) and at a variety of synapses in the peripheral and central nervous systems and has a structural function in stabilizing the sarcolemma. Also implicated in signaling events and synaptic transmission. This is Dystrophin from Homo sapiens (Human).